Consider the following 229-residue polypeptide: UPF0758 protein CA_C1241 (229 aa).

In terms of domain architecture, MPN spans 107 to 229 (KITSPKEAAN…YISLKEEGLL (123 aa)). Residues His178, His180, and Asp191 each coordinate Zn(2+). The JAMM motif motif lies at 178–191 (HNHPSGDPKPSNED).

Belongs to the UPF0758 family.

This is UPF0758 protein CA_C1241 from Clostridium acetobutylicum (strain ATCC 824 / DSM 792 / JCM 1419 / IAM 19013 / LMG 5710 / NBRC 13948 / NRRL B-527 / VKM B-1787 / 2291 / W).